The chain runs to 502 residues: Glycerol kinase (502 aa).

Thr14 serves as a coordination point for ADP. Residues Thr14, Thr15, and Ser16 each contribute to the ATP site. Residue Thr14 coordinates sn-glycerol 3-phosphate. ADP is bound at residue Arg18. 4 residues coordinate sn-glycerol 3-phosphate: Arg84, Glu85, Tyr136, and Asp246. Glycerol-binding residues include Arg84, Glu85, Tyr136, Asp246, and Gln247. Thr268 and Gly311 together coordinate ADP. 4 residues coordinate ATP: Thr268, Gly311, Gln315, and Gly412. Residues Gly412 and Asn416 each coordinate ADP.

It belongs to the FGGY kinase family. Homotetramer and homodimer (in equilibrium). Heterodimer with EIIA-Glc. Binds 1 zinc ion per glycerol kinase EIIA-Glc dimer. The zinc ion is important for dimerization.

It catalyses the reaction glycerol + ATP = sn-glycerol 3-phosphate + ADP + H(+). Its pathway is polyol metabolism; glycerol degradation via glycerol kinase pathway; sn-glycerol 3-phosphate from glycerol: step 1/1. Its activity is regulated as follows. Activity of this regulatory enzyme is affected by several metabolites. Allosterically and non-competitively inhibited by fructose 1,6-bisphosphate (FBP) and unphosphorylated phosphocarrier protein EIIA-Glc (III-Glc), an integral component of the bacterial phosphotransferase (PTS) system. Its function is as follows. Key enzyme in the regulation of glycerol uptake and metabolism. Catalyzes the phosphorylation of glycerol to yield sn-glycerol 3-phosphate. The protein is Glycerol kinase of Shigella flexneri.